The sequence spans 598 residues: Glutamyl-tRNA(Gln) amidotransferase subunit E (598 aa).

The protein belongs to the GatB/GatE family. GatE subfamily. Heterodimer of GatD and GatE.

The enzyme catalyses L-glutamyl-tRNA(Gln) + L-glutamine + ATP + H2O = L-glutaminyl-tRNA(Gln) + L-glutamate + ADP + phosphate + H(+). Allows the formation of correctly charged Gln-tRNA(Gln) through the transamidation of misacylated Glu-tRNA(Gln) in organisms which lack glutaminyl-tRNA synthetase. The reaction takes place in the presence of glutamine and ATP through an activated gamma-phospho-Glu-tRNA(Gln). The GatDE system is specific for glutamate and does not act on aspartate. The chain is Glutamyl-tRNA(Gln) amidotransferase subunit E from Thermoplasma volcanium (strain ATCC 51530 / DSM 4299 / JCM 9571 / NBRC 15438 / GSS1).